A 543-amino-acid polypeptide reads, in one-letter code: NXPE family member 4 (543 aa).

Residues 1–26 form the signal peptide; that stretch reads MKTLASRKSLWMLLFIVIFWVSFTVF. N-linked (GlcNAc...) asparagine glycosylation is found at Asn91, Asn159, and Asn223.

The protein belongs to the NXPE family.

It is found in the secreted. This is NXPE family member 4 (Nxpe4) from Mus musculus (Mouse).